The chain runs to 143 residues: Large-conductance mechanosensitive channel (143 aa).

The next 2 helical transmembrane spans lie at 19–39 (VGVI…GDLI) and 81–101 (GSFL…FGVI).

It belongs to the MscL family. In terms of assembly, homopentamer.

Its subcellular location is the cell inner membrane. Its function is as follows. Channel that opens in response to stretch forces in the membrane lipid bilayer. May participate in the regulation of osmotic pressure changes within the cell. The sequence is that of Large-conductance mechanosensitive channel from Rhodopseudomonas palustris (strain BisB5).